Reading from the N-terminus, the 331-residue chain is Osmotic avoidance abnormal protein 8 (331 aa).

The N-terminal stretch at 1-21 (MPAKMLKWLLIHIFLIHSIFC) is a signal peptide.

Expressed in the hypodermal syncitium but not in hypodermal seam cells.

It is found in the secreted. In terms of biological role, negative regulator of the osmotic stress response. Acts via the transmembrane protein ptr-23. The polypeptide is Osmotic avoidance abnormal protein 8 (osm-8) (Caenorhabditis elegans).